Consider the following 114-residue polypeptide: T-cell leukemia/lymphoma protein 1A (114 aa).

Belongs to the TCL1 family. As to quaternary structure, homodimer. Interacts with AKT1, AKT2 and AKT3 (via PH domain). Interacts with PNPT1; the interaction has no effect on PNPT1 exonuclease activity. In terms of tissue distribution, restricted in the T-cell lineage to immature thymocytes and activated peripheral lymphocytes. Preferentially expressed early in T- and B-lymphocyte differentiation.

The protein localises to the cytoplasm. Its subcellular location is the nucleus. It localises to the microsome. The protein resides in the endoplasmic reticulum. Its function is as follows. Enhances the phosphorylation and activation of AKT1, AKT2 and AKT3. Promotes nuclear translocation of AKT1. Enhances cell proliferation, stabilizes mitochondrial membrane potential and promotes cell survival. The chain is T-cell leukemia/lymphoma protein 1A (TCL1A) from Homo sapiens (Human).